We begin with the raw amino-acid sequence, 434 residues long: MSPSVFKISPGINSYDWGKKGSASLAAQLATTSIPDFSIDEDKAYAELWMGTHPNNPSRLSDNTLLSEHLKSHPELIGSSVSSKFEDCKDGSLPFLFKVLSIGTALSIQAHPDKPLAKKLFDEKPDVYKDPNHKPEMAIALTPFLAFLNFLPLSVLLLHLLTVPELQEFVDSSLTESLASSLGLPTSQPPDTSLFKPTESPATAEQKDILKQIFAALMSADKKLVEEAISKLIKRYQAKRDIKENEKSLVDLALRLNDQYPGDVGVLCVFLLNVVELKRGEAAFLGANEPHAYIEGDIIECMATSDNVVRAGLTPKLRDVDTLVSMLTYEAAPGNKQLLQPTPFQKGDDTTKLYDPPIAEFSVLRTELSKGMKTSHRPVEGPSLCVITEGEGVVRNGNDRSEFVRGDVIFVGAGKEVEWEAIKGLEMFRAYVEA.

Zn(2+)-binding residues include glutamine 109, histidine 111, and glutamate 136. The segment covering 181 to 191 (SLGLPTSQPPD) has biased composition (polar residues). The tract at residues 181-200 (SLGLPTSQPPDTSLFKPTES) is disordered. Histidine 291 lines the Zn(2+) pocket. The active site involves arginine 310.

It belongs to the mannose-6-phosphate isomerase type 1 family. The cofactor is Zn(2+).

Its subcellular location is the cytoplasm. It carries out the reaction D-mannose 6-phosphate = D-fructose 6-phosphate. Its pathway is nucleotide-sugar biosynthesis; GDP-alpha-D-mannose biosynthesis; alpha-D-mannose 1-phosphate from D-fructose 6-phosphate: step 1/2. Functionally, involved in the synthesis of the GDP-mannose and dolichol-phosphate-mannose required for a number of critical mannosyl transfer reactions. The protein is Mannose-6-phosphate isomerase (MAN1) of Cryptococcus neoformans var. neoformans serotype D (strain JEC21 / ATCC MYA-565) (Filobasidiella neoformans).